The following is a 575-amino-acid chain: Cytochrome P450 monooxygenase opaB (575 aa).

A glycan (N-linked (GlcNAc...) asparagine) is linked at Asn-6. A helical transmembrane segment spans residues 37–57 (FILAAILASIILLIIRNSMLS). Residues Asn-83 and Asn-242 are each glycosylated (N-linked (GlcNAc...) asparagine). Cys-521 is a heme binding site.

It belongs to the cytochrome P450 family. Heme serves as cofactor.

The protein resides in the membrane. Its pathway is secondary metabolite biosynthesis. Functionally, cytochrome P450 monooxygenase; part of the gene cluster that mediates the biosynthesis of oxepinamides, derivatives of anthranilyl-containing tripeptides that share an oxepin ring and a fused pyrimidinone moiety. The nonribosomal peptide synthetase (NRPS) opaA assembles the quinazolinone core with D-Phe incorporation. The first adenylation domain (A1) of opaA loads and activates anthranilic acid whereas the second A domain (A2) is for activating of L-Phe, which is then converted to D-form by the E domain. The third A domain (A3) is responsible for L-Ile activation and the terminal condensation domain C3 for cyclization and releasing the NRPS product protuboxepin K. The cytochrome P450 monooxygenase opaB then catalyzes alone the oxepin ring formation to convert protuboxepin K into protuboxepin A. The flavoenzyme opaC installs subsequently one hydroxyl group at the oxepin ring, accompanied by double bond migration, to form 15-epi-oxepinamide E. The epimerase opaE changes the D-Phe residue back to L-form, leading to oxepinamide E, which is further methylated at the hydroxyl group at C-12 by the O-methyltransferase OpaF to yield oxepinamide F. In Aspergillus ustus, this protein is Cytochrome P450 monooxygenase opaB.